Reading from the N-terminus, the 818-residue chain is MARVDFWHTASIPRLNIPALRMSDGPNGVRGTRFFNGIPAACFPCATALGATWDAHLLHEVGQLMGDESIAKGSHIVLGPTINIQRSPLGGRGFESFAEDGVLSGILAGNYCKGLQEKGVAATLKHFVCNDQEHERLAVSSIVTMRALREIYLLPFQLAMRICPTACVMTAYNKVNGTHVSENKELITDILRKEWNWDGLVMSDWFGTYTTSDAINAGLDLEMPGKTRWRGSALAHAVSSNKVAEFVLDDRVRNILNLVNWVEPLGIPEHAPEKALNRPQDRDLLRRAAAESVVLMKNEDNILPLRKDKPILVIGPNAQIAAYCGGGSASLDPYYTVSPFEGVTAKATSEVQFSQGVYSHKELPLLGPLLKTQDGKPGFTFRVYNEPPSHKDRTLVDELHLLRSSGFLMDYINPKIHSFTFFVDMEGYFTPTESGVYDFGVTVVGTGRLLIDNETVVDNTKNQRQGTAFFGNATVEERGSKHLNAGQTYKVVLEFGSAPTSDLDTRGIVVFGPGGFRFGAARQVSQEELISNAVSQASQASQVIIFAGLTSEWETEGNDREHMDLPPGTDEMISRVLDANPDNTVVCLQSGTPVTMPWVHKAKALVHAWFGGNECGNGIADVLFGDVNPSAKLPVTFPVRLQDNPSYLNFRSERGRVLYGEDVYVGYRYYEKTNVKPLYPFGHGLSYTTFSRSDLKITTSPEKSTLTDGEPITATVQVKNTGTVAGAEIVQLWVLPPKTEVNRPVRELKGFTKVFLQPGEEKQVEIVVEKKLATSWWDEQRGKWASEKGTYGVSVTGTGEEELSGEFGVERTRYWVGL.

An N-linked (GlcNAc...) asparagine glycan is attached at Asn-176. Asp-204 is a catalytic residue. The region spanning 374 to 534 (DGKPGFTFRV…SQEELISNAV (161 aa)) is the PA14 domain. N-linked (GlcNAc...) asparagine glycosylation is found at Asn-453 and Asn-472.

The protein belongs to the glycosyl hydrolase 3 family.

Its subcellular location is the secreted. The enzyme catalyses Hydrolysis of terminal, non-reducing beta-D-glucosyl residues with release of beta-D-glucose.. The protein operates within glycan metabolism; cellulose degradation. Functionally, beta-glucosidases are one of a number of cellulolytic enzymes involved in the degradation of cellulosic biomass. Catalyzes the last step releasing glucose from the inhibitory cellobiose. The protein is Probable beta-glucosidase I (bglI) of Aspergillus niger (strain ATCC MYA-4892 / CBS 513.88 / FGSC A1513).